Consider the following 483-residue polypeptide: ATP synthase subunit beta (483 aa).

169 to 176 (GGAGVGKT) provides a ligand contact to ATP.

Belongs to the ATPase alpha/beta chains family. In terms of assembly, F-type ATPases have 2 components, CF(1) - the catalytic core - and CF(0) - the membrane proton channel. CF(1) has five subunits: alpha(3), beta(3), gamma(1), delta(1), epsilon(1). CF(0) has three main subunits: a(1), b(2) and c(9-12). The alpha and beta chains form an alternating ring which encloses part of the gamma chain. CF(1) is attached to CF(0) by a central stalk formed by the gamma and epsilon chains, while a peripheral stalk is formed by the delta and b chains.

The protein resides in the cell membrane. It carries out the reaction ATP + H2O + 4 H(+)(in) = ADP + phosphate + 5 H(+)(out). Functionally, produces ATP from ADP in the presence of a proton gradient across the membrane. The catalytic sites are hosted primarily by the beta subunits. The chain is ATP synthase subunit beta from Rhodococcus jostii (strain RHA1).